The chain runs to 166 residues: Bacterial non-heme ferritin (166 aa).

Residues 2-145 form the Ferritin-like diiron domain; it reads LSKELLAALN…THIDYLTRIG (144 aa). Fe cation-binding residues include Glu17, Glu50, His53, Glu94, and Gln127.

The protein belongs to the ferritin family. Prokaryotic subfamily.

It localises to the cytoplasm. The catalysed reaction is 4 Fe(2+) + O2 + 6 H2O = 4 iron(III) oxide-hydroxide + 12 H(+). In terms of biological role, iron-storage protein. This chain is Bacterial non-heme ferritin (ftnA), found in Staphylococcus epidermidis (strain ATCC 12228 / FDA PCI 1200).